A 186-amino-acid chain; its full sequence is Ribosome-recycling factor (186 aa).

This sequence belongs to the RRF family.

The protein resides in the cytoplasm. Functionally, responsible for the release of ribosomes from messenger RNA at the termination of protein biosynthesis. May increase the efficiency of translation by recycling ribosomes from one round of translation to another. The protein is Ribosome-recycling factor of Burkholderia lata (strain ATCC 17760 / DSM 23089 / LMG 22485 / NCIMB 9086 / R18194 / 383).